A 407-amino-acid polypeptide reads, in one-letter code: 5-aminolevulinate synthase 1 (407 aa).

Substrate is bound by residues R21, S137, and K156. 3 residues coordinate pyridoxal 5'-phosphate: S189, H217, and T245. K248 is an active-site residue. At K248 the chain carries N6-(pyridoxal phosphate)lysine. Pyridoxal 5'-phosphate is bound by residues S277 and T278. T363 is a binding site for substrate.

This sequence belongs to the class-II pyridoxal-phosphate-dependent aminotransferase family. Homodimer. Pyridoxal 5'-phosphate serves as cofactor.

The catalysed reaction is succinyl-CoA + glycine + H(+) = 5-aminolevulinate + CO2 + CoA. Its pathway is porphyrin-containing compound metabolism; protoporphyrin-IX biosynthesis; 5-aminolevulinate from glycine: step 1/1. This is 5-aminolevulinate synthase 1 (hemA) from Cereibacter sphaeroides (strain ATCC 17023 / DSM 158 / JCM 6121 / CCUG 31486 / LMG 2827 / NBRC 12203 / NCIMB 8253 / ATH 2.4.1.) (Rhodobacter sphaeroides).